Here is a 368-residue protein sequence, read N- to C-terminus: 3-dehydroquinate synthase (368 aa).

NAD(+) is bound by residues 69 to 74, 103 to 107, 127 to 128, K140, and K149; these read DGEAYK, GVIGD, and TT. 3 residues coordinate Zn(2+): E182, H245, and H262.

It belongs to the sugar phosphate cyclases superfamily. Dehydroquinate synthase family. The cofactor is NAD(+). Co(2+) is required as a cofactor. Zn(2+) serves as cofactor.

It is found in the cytoplasm. It carries out the reaction 7-phospho-2-dehydro-3-deoxy-D-arabino-heptonate = 3-dehydroquinate + phosphate. Its pathway is metabolic intermediate biosynthesis; chorismate biosynthesis; chorismate from D-erythrose 4-phosphate and phosphoenolpyruvate: step 2/7. Its function is as follows. Catalyzes the conversion of 3-deoxy-D-arabino-heptulosonate 7-phosphate (DAHP) to dehydroquinate (DHQ). The chain is 3-dehydroquinate synthase from Pseudomonas aeruginosa (strain ATCC 15692 / DSM 22644 / CIP 104116 / JCM 14847 / LMG 12228 / 1C / PRS 101 / PAO1).